Here is an 83-residue protein sequence, read N- to C-terminus: MRRALTLAVLATCAVLPALAQVADLRSKTEFRVCADPAAVPMSSQDGKGFENRIAQLFAEKLGVPVAYTWFPQSRLHPQEPAR.

Positions 1–20 (MRRALTLAVLATCAVLPALA) are cleaved as a signal peptide.

This sequence to P.denitrificans and M.extorquens MoxJ.

This is an uncharacterized protein from Paracoccus denitrificans.